We begin with the raw amino-acid sequence, 559 residues long: Suppressor of tumorigenicity 7 protein-like (559 aa).

3 consecutive transmembrane segments (helical) span residues glycine 39 to leucine 59, phenylalanine 83 to tryptophan 103, and leucine 513 to leucine 533.

The protein belongs to the ST7 family.

It is found in the membrane. The sequence is that of Suppressor of tumorigenicity 7 protein-like (St7l) from Rattus norvegicus (Rat).